The primary structure comprises 188 residues: MPHSSPGAPLDPVAFIHSQIRTVPDWPQPGVQFRDITTLLQSPKALRILVDLFVERYVDAKLDYVAGLDARGFIIAPIVAYELSVGFVPIRKVGKLPYKTRSESYDLEYGSATVEIHEDACKPGDRVIIMDDLIATGGTMMAGRNLLQRLGAEVVEGAAIIDLPDLGGSTLLRNAGLTVYTVTEFSGH.

It belongs to the purine/pyrimidine phosphoribosyltransferase family. In terms of assembly, homodimer.

The protein resides in the cytoplasm. It catalyses the reaction AMP + diphosphate = 5-phospho-alpha-D-ribose 1-diphosphate + adenine. Its pathway is purine metabolism; AMP biosynthesis via salvage pathway; AMP from adenine: step 1/1. Catalyzes a salvage reaction resulting in the formation of AMP, that is energically less costly than de novo synthesis. This is Adenine phosphoribosyltransferase from Burkholderia cenocepacia (strain HI2424).